The sequence spans 445 residues: Tubulin beta-9 chain (445 aa).

Positions 11, 69, 138, 142, 143, 144, 204, and 226 each coordinate GTP. Residue Glu-69 coordinates Mg(2+). A disordered region spans residues 423–445 (QQYQDATADDEEYEEEEEYEAEA). The span at 429-445 (TADDEEYEEEEEYEAEA) shows a compositional bias: acidic residues.

The protein belongs to the tubulin family. Dimer of alpha and beta chains. A typical microtubule is a hollow water-filled tube with an outer diameter of 25 nm and an inner diameter of 15 nM. Alpha-beta heterodimers associate head-to-tail to form protofilaments running lengthwise along the microtubule wall with the beta-tubulin subunit facing the microtubule plus end conferring a structural polarity. Microtubules usually have 13 protofilaments but different protofilament numbers can be found in some organisms and specialized cells. Mg(2+) serves as cofactor.

It localises to the cytoplasm. Its subcellular location is the cytoskeleton. Functionally, tubulin is the major constituent of microtubules, a cylinder consisting of laterally associated linear protofilaments composed of alpha- and beta-tubulin heterodimers. Microtubules grow by the addition of GTP-tubulin dimers to the microtubule end, where a stabilizing cap forms. Below the cap, tubulin dimers are in GDP-bound state, owing to GTPase activity of alpha-tubulin. This chain is Tubulin beta-9 chain, found in Gossypium hirsutum (Upland cotton).